Reading from the N-terminus, the 486-residue chain is Cardiolipin synthase A (486 aa).

Helical transmembrane passes span 3 to 23 and 38 to 58; these read TVYT…IAGV and MAWL…YLAV. PLD phosphodiesterase domains follow at residues 219 to 246 and 399 to 426; these read MDLR…VDPR and EGGL…DMRS. Catalysis depends on residues His224, Lys226, Asp231, His404, Lys406, and Asp411.

This sequence belongs to the phospholipase D family. Cardiolipin synthase subfamily. ClsA sub-subfamily.

It localises to the cell inner membrane. The catalysed reaction is 2 a 1,2-diacyl-sn-glycero-3-phospho-(1'-sn-glycerol) = a cardiolipin + glycerol. Catalyzes the reversible phosphatidyl group transfer from one phosphatidylglycerol molecule to another to form cardiolipin (CL) (diphosphatidylglycerol) and glycerol. The chain is Cardiolipin synthase A from Shigella flexneri.